The chain runs to 137 residues: Large ribosomal subunit protein uL16 (137 aa).

Belongs to the universal ribosomal protein uL16 family. In terms of assembly, part of the 50S ribosomal subunit.

Binds 23S rRNA and is also seen to make contacts with the A and possibly P site tRNAs. In Brucella abortus (strain S19), this protein is Large ribosomal subunit protein uL16.